A 213-amino-acid polypeptide reads, in one-letter code: Octanoyltransferase (213 aa).

Residues 32-207 (ESTLDEIWLV…NILALLNNPD (176 aa)) enclose the BPL/LPL catalytic domain. Substrate is bound by residues 71–78 (RGGQVTYH), 138–140 (SLG), and 151–153 (GLA). Cys169 functions as the Acyl-thioester intermediate in the catalytic mechanism.

This sequence belongs to the LipB family.

The protein resides in the cytoplasm. The catalysed reaction is octanoyl-[ACP] + L-lysyl-[protein] = N(6)-octanoyl-L-lysyl-[protein] + holo-[ACP] + H(+). The protein operates within protein modification; protein lipoylation via endogenous pathway; protein N(6)-(lipoyl)lysine from octanoyl-[acyl-carrier-protein]: step 1/2. Its function is as follows. Catalyzes the transfer of endogenously produced octanoic acid from octanoyl-acyl-carrier-protein onto the lipoyl domains of lipoate-dependent enzymes. Lipoyl-ACP can also act as a substrate although octanoyl-ACP is likely to be the physiological substrate. The polypeptide is Octanoyltransferase (Escherichia coli (strain SMS-3-5 / SECEC)).